We begin with the raw amino-acid sequence, 821 residues long: Probable phosphoenolpyruvate synthase (821 aa).

The Tele-phosphohistidine intermediate role is filled by H444. Substrate contacts are provided by R543, R590, E687, G709, T710, N711, and D712. Residue E687 coordinates Mg(2+). D712 contributes to the Mg(2+) binding site. C759 functions as the Proton donor in the catalytic mechanism.

It belongs to the PEP-utilizing enzyme family. The cofactor is Mg(2+).

The enzyme catalyses pyruvate + ATP + H2O = phosphoenolpyruvate + AMP + phosphate + 2 H(+). It participates in carbohydrate biosynthesis; gluconeogenesis. Catalyzes the phosphorylation of pyruvate to phosphoenolpyruvate. The polypeptide is Probable phosphoenolpyruvate synthase (ppsA) (Pyrococcus horikoshii (strain ATCC 700860 / DSM 12428 / JCM 9974 / NBRC 100139 / OT-3)).